Reading from the N-terminus, the 256-residue chain is POU domain class 2-associating factor 1 (256 aa).

Positions 1–23 (MLWQKPTAPEQAPAPPRPYQGVR) are disordered. In terms of domain architecture, OCA spans 16–38 (PRPYQGVRVKEPVKELLRRKRGH).

It belongs to the POU2AF family. In terms of assembly, interacts with POU2F1/OCT1 and POU2F2/OCT2; the interaction increases POU2F1 and POU2F2 transactivation activity. In terms of processing, ubiquitinated; mediated by SIAH1 or SIAH2 and leading to its subsequent proteasomal degradation.

Its subcellular location is the nucleus. Functionally, transcriptional coactivator that specifically associates with either POU2F1/OCT1 or POU2F2/OCT2. It boosts the POU2F1/OCT1 mediated promoter activity and to a lesser extent, that of POU2F2/OCT2. It recognizes the POU domains of POU2F1/OCT1 and POU2F2/OCT2. It is essential for the response of B-cells to antigens and required for the formation of germinal centers. Regulates IL6 expression in B cells as POU2F2/OCT2 coactivator. The chain is POU domain class 2-associating factor 1 (POU2AF1) from Bos taurus (Bovine).